Consider the following 392-residue polypeptide: O-phospho-L-seryl-tRNA:Cys-tRNA synthase (392 aa).

Residues 85 to 86 (AR), Asn-190, and 213 to 215 (SGH) each bind pyridoxal 5'-phosphate. Lys-216 bears the N6-(pyridoxal phosphate)lysine mark.

It belongs to the SepCysS family. In terms of assembly, homodimer. Interacts with SepRS. Pyridoxal 5'-phosphate serves as cofactor.

It catalyses the reaction O-phospho-L-seryl-tRNA(Cys) + hydrogen sulfide + H(+) = L-cysteinyl-tRNA(Cys) + phosphate. Functionally, converts O-phospho-L-seryl-tRNA(Cys) (Sep-tRNA(Cys)) to L-cysteinyl-tRNA(Cys) (Cys-tRNA(Cys)). The polypeptide is O-phospho-L-seryl-tRNA:Cys-tRNA synthase (Methanoculleus marisnigri (strain ATCC 35101 / DSM 1498 / JR1)).